The sequence spans 396 residues: S-adenosylmethionine synthase (396 aa).

H15 serves as a coordination point for ATP. D17 is a binding site for Mg(2+). A K(+)-binding site is contributed by E43. L-methionine contacts are provided by E56 and Q99. The segment at 99–109 (QSSDIAQGVDR) is flexible loop. ATP is bound by residues 175-177 (DGK), 241-242 (RF), D250, 256-257 (RK), S273, and K277. An L-methionine-binding site is contributed by D250. L-methionine is bound at residue K281.

Belongs to the AdoMet synthase family. As to quaternary structure, homotetramer; dimer of dimers. Mg(2+) is required as a cofactor. K(+) serves as cofactor.

It localises to the cytoplasm. It carries out the reaction L-methionine + ATP + H2O = S-adenosyl-L-methionine + phosphate + diphosphate. It functions in the pathway amino-acid biosynthesis; S-adenosyl-L-methionine biosynthesis; S-adenosyl-L-methionine from L-methionine: step 1/1. Catalyzes the formation of S-adenosylmethionine (AdoMet) from methionine and ATP. The overall synthetic reaction is composed of two sequential steps, AdoMet formation and the subsequent tripolyphosphate hydrolysis which occurs prior to release of AdoMet from the enzyme. The sequence is that of S-adenosylmethionine synthase from Pelotomaculum thermopropionicum (strain DSM 13744 / JCM 10971 / SI).